Reading from the N-terminus, the 311-residue chain is Aspartate carbamoyltransferase catalytic subunit (311 aa).

The carbamoyl phosphate site is built by Arg-55 and Thr-56. Lys-85 lines the L-aspartate pocket. Carbamoyl phosphate-binding residues include Arg-106, His-135, and Gln-138. L-aspartate is bound by residues Arg-168 and Arg-230. Carbamoyl phosphate is bound by residues Leu-268 and Pro-269.

It belongs to the aspartate/ornithine carbamoyltransferase superfamily. ATCase family. As to quaternary structure, heterododecamer (2C3:3R2) of six catalytic PyrB chains organized as two trimers (C3), and six regulatory PyrI chains organized as three dimers (R2).

It carries out the reaction carbamoyl phosphate + L-aspartate = N-carbamoyl-L-aspartate + phosphate + H(+). Its pathway is pyrimidine metabolism; UMP biosynthesis via de novo pathway; (S)-dihydroorotate from bicarbonate: step 2/3. Catalyzes the condensation of carbamoyl phosphate and aspartate to form carbamoyl aspartate and inorganic phosphate, the committed step in the de novo pyrimidine nucleotide biosynthesis pathway. In Salmonella dublin (strain CT_02021853), this protein is Aspartate carbamoyltransferase catalytic subunit.